Reading from the N-terminus, the 224-residue chain is Small ribosomal subunit protein uS3c (224 aa).

A KH type-2 domain is found at 43-124; it reads IKNYIQKNRK…RLNIAIEKVK (82 aa).

Belongs to the universal ribosomal protein uS3 family. As to quaternary structure, part of the 30S ribosomal subunit.

It localises to the plastid. The protein localises to the chloroplast. The protein is Small ribosomal subunit protein uS3c (rps3) of Saccharum hybrid (Sugarcane).